The sequence spans 859 residues: Sulfate permease 1 (859 aa).

Asparagine 51 and asparagine 93 each carry an N-linked (GlcNAc...) asparagine glycan. 8 helical membrane passes run 94–114 (LTAKSAGSYLVSLFPIIKWFP), 116–136 (YNFTWGYADLVAGITVGCVLV), 148–168 (LSPEYGLYSSFIGAFIYSLFA), 173–193 (VCIGPVAVMSLQTAKVIAEVL), 206–226 (PIIATTLCLLCGIVATGLGIL), 234–254 (LISLNAVAGFMTGSAFNIIWG), 292–312 (FGLIPLVILYVWKWWCGTFGI), and 332–352 (FYFYAQAMRNAVVIVVFTAIS). 2 N-linked (GlcNAc...) asparagine glycosylation sites follow: asparagine 358 and asparagine 391. Helical transmembrane passes span 395 to 415 (EIPASIIVLVLEHIAISKSFG), 428 to 448 (LIAIGVTNLIGTFFHSYPATG), 468 to 488 (VFTGGCVLLALYCLTDAFFFI), and 525 to 545 (FIVTVFITVFSSIENGIYFAM). Asparagine 630, asparagine 653, and asparagine 718 each carry an N-linked (GlcNAc...) asparagine glycan. Positions 630-808 (NTTVRPPPPG…SIIAGHSSFH (179 aa)) constitute an STAS domain.

This sequence belongs to the SLC26A/SulP transporter (TC 2.A.53) family.

It is found in the membrane. In terms of biological role, high affinity uptake of sulfate into the cell. This Saccharomyces cerevisiae (strain ATCC 204508 / S288c) (Baker's yeast) protein is Sulfate permease 1 (SUL1).